Reading from the N-terminus, the 356-residue chain is Peptide methionine sulfoxide reductase MsrA/MsrB (356 aa).

The interval 46–199 (HEIYLAGGCF…PNGYCHIDLE (154 aa)) is peptide methionine sulfoxide reductase A. Cys-54 is a catalytic residue. Positions 216–339 (DAELKAKLTP…NSAAVKFIPL (124 aa)) constitute a MsrB domain. Cys-328 acts as the Nucleophile in catalysis.

The protein in the N-terminal section; belongs to the MsrA Met sulfoxide reductase family. It in the C-terminal section; belongs to the MsrB Met sulfoxide reductase family.

The catalysed reaction is L-methionyl-[protein] + [thioredoxin]-disulfide + H2O = L-methionyl-(S)-S-oxide-[protein] + [thioredoxin]-dithiol. The enzyme catalyses [thioredoxin]-disulfide + L-methionine + H2O = L-methionine (S)-S-oxide + [thioredoxin]-dithiol. It catalyses the reaction L-methionyl-[protein] + [thioredoxin]-disulfide + H2O = L-methionyl-(R)-S-oxide-[protein] + [thioredoxin]-dithiol. In terms of biological role, has an important function as a repair enzyme for proteins that have been inactivated by oxidation. Catalyzes the reversible oxidation-reduction of methionine sulfoxide in proteins to methionine. This Aggregatibacter actinomycetemcomitans (Actinobacillus actinomycetemcomitans) protein is Peptide methionine sulfoxide reductase MsrA/MsrB (msrAB).